Here is a 274-residue protein sequence, read N- to C-terminus: tRNA pseudouridine synthase A (274 aa).

The active-site Nucleophile is the D60. Position 118 (Y118) interacts with substrate.

This sequence belongs to the tRNA pseudouridine synthase TruA family. In terms of assembly, homodimer.

The enzyme catalyses uridine(38/39/40) in tRNA = pseudouridine(38/39/40) in tRNA. Functionally, formation of pseudouridine at positions 38, 39 and 40 in the anticodon stem and loop of transfer RNAs. The chain is tRNA pseudouridine synthase A from Picosynechococcus sp. (strain ATCC 27264 / PCC 7002 / PR-6) (Agmenellum quadruplicatum).